The primary structure comprises 415 residues: uncharacterized protein (415 aa).

Residues Cys85, Cys91, Cys94, and Cys175 each contribute to the [4Fe-4S] cluster site. Residues Gln248, Tyr276, Glu297, and Asn344 each contribute to the S-adenosyl-L-methionine site. Residue Cys371 is the Nucleophile of the active site.

It belongs to the class I-like SAM-binding methyltransferase superfamily. RNA M5U methyltransferase family.

This is an uncharacterized protein from Leptospira interrogans serogroup Icterohaemorrhagiae serovar copenhageni (strain Fiocruz L1-130).